We begin with the raw amino-acid sequence, 519 residues long: Protein nucleotidyltransferase YdiU (519 aa).

Residues glycine 101, glycine 103, arginine 104, lysine 124, aspartate 136, glycine 137, arginine 194, and arginine 201 each coordinate ATP. The active-site Proton acceptor is aspartate 271. Residues asparagine 272 and aspartate 281 each coordinate Mg(2+). Aspartate 281 lines the ATP pocket.

Belongs to the SELO family. Mg(2+) is required as a cofactor. The cofactor is Mn(2+).

The enzyme catalyses L-seryl-[protein] + ATP = 3-O-(5'-adenylyl)-L-seryl-[protein] + diphosphate. The catalysed reaction is L-threonyl-[protein] + ATP = 3-O-(5'-adenylyl)-L-threonyl-[protein] + diphosphate. It catalyses the reaction L-tyrosyl-[protein] + ATP = O-(5'-adenylyl)-L-tyrosyl-[protein] + diphosphate. It carries out the reaction L-histidyl-[protein] + UTP = N(tele)-(5'-uridylyl)-L-histidyl-[protein] + diphosphate. The enzyme catalyses L-seryl-[protein] + UTP = O-(5'-uridylyl)-L-seryl-[protein] + diphosphate. The catalysed reaction is L-tyrosyl-[protein] + UTP = O-(5'-uridylyl)-L-tyrosyl-[protein] + diphosphate. In terms of biological role, nucleotidyltransferase involved in the post-translational modification of proteins. It can catalyze the addition of adenosine monophosphate (AMP) or uridine monophosphate (UMP) to a protein, resulting in modifications known as AMPylation and UMPylation. The protein is Protein nucleotidyltransferase YdiU of Azoarcus sp. (strain BH72).